Here is a 196-residue protein sequence, read N- to C-terminus: Large ribosomal subunit protein uL6 (196 aa).

It belongs to the universal ribosomal protein uL6 family. In terms of assembly, part of the 50S ribosomal subunit.

This protein binds to the 23S rRNA, and is important in its secondary structure. It is located near the subunit interface in the base of the L7/L12 stalk, and near the tRNA binding site of the peptidyltransferase center. The polypeptide is Large ribosomal subunit protein uL6 (Archaeoglobus fulgidus (strain ATCC 49558 / DSM 4304 / JCM 9628 / NBRC 100126 / VC-16)).